The following is a 434-amino-acid chain: 3-ketoacyl-CoA thiolase A, peroxisomal (434 aa).

The transit peptide at 1 to 36 (MSESVGRTSAMHRLQVVLGHLAGRPESSSALQAAPC) directs the protein to the peroxisome. The tract at residues 11 to 36 (MHRLQVVLGHLAGRPESSSALQAAPC) is PTS2-type peroxisomal targeting signal. Cys133 functions as the Acyl-thioester intermediate in the catalytic mechanism. 2 positions are modified to N6-acetyllysine: Lys183 and Lys244. Residues His387 and Cys418 each act as proton acceptor in the active site.

Belongs to the thiolase-like superfamily. Thiolase family. As to quaternary structure, homodimer. Interacts (via PTS2-type peroxisomal targeting signal region) with PEX7; leading to its translocation into peroxisomes.

It localises to the peroxisome. It carries out the reaction an acyl-CoA + acetyl-CoA = a 3-oxoacyl-CoA + CoA. The catalysed reaction is 2 acetyl-CoA = acetoacetyl-CoA + CoA. It catalyses the reaction tetradecanoyl-CoA + acetyl-CoA = 3-oxohexadecanoyl-CoA + CoA. The enzyme catalyses hexanoyl-CoA + acetyl-CoA = 3-oxooctanoyl-CoA + CoA. It carries out the reaction 3-oxohexadecanedioyl-CoA + CoA = tetradecanedioyl-CoA + acetyl-CoA. The catalysed reaction is 3-oxo-(6Z,9Z,12Z,15Z,18Z,21Z)-tetracosahexaenoyl-CoA + CoA = (4Z,7Z,10Z,13Z,16Z,19Z)-docosahexaenoyl-CoA + acetyl-CoA. It functions in the pathway lipid metabolism; peroxisomal fatty acid beta-oxidation. In terms of biological role, responsible for the thiolytic cleavage of straight chain 3-keto fatty acyl-CoAs (3-oxoacyl-CoAs). Plays an important role in fatty acid peroxisomal beta-oxidation. Catalyzes the cleavage of short, medium, long, and very long straight chain 3-oxoacyl-CoAs. Medium chain straight 3-oxoacyl-CoAs are preferred substrates. The protein is 3-ketoacyl-CoA thiolase A, peroxisomal of Rattus norvegicus (Rat).